A 725-amino-acid polypeptide reads, in one-letter code: A-agglutinin anchorage subunit (725 aa).

Residues 1 to 24 (MTLSFAHFTYLFTILLGLTNIALA) form the signal peptide. Repeat copies occupy residues 53 to 149 (VSTS…EVGT), 182 to 188 (TTTSLSS), 189 to 195 (TSTSPSS), 196 to 202 (TSTSPSS), 203 to 209 (TSTSSSS), 210 to 216 (TSTSSSS), 217 to 223 (TSTSSSS), 224 to 230 (TSTSPSS), 231 to 237 (TSTSSSL), 238 to 244 (TSTSSSS), 245 to 251 (TSTSQSS), 252 to 258 (TSTSSSS), 259 to 265 (TSTSPSS), 266 to 272 (TSTSSSS), 273 to 279 (TSTSPSS), 280 to 286 (KSTSASS), 287 to 293 (TSTSSYS), 294 to 300 (TSTSPSL), and 301 to 307 (TSSSPTL). Residues 53 to 493 (VSTSTIVQAG…TSHSYSSVQT (441 aa)) are 2 X approximate repeats. Disordered regions lie at residues 168 to 318 (PVTS…TSIS) and 335 to 363 (SSTS…TPSM). The segment at 182–307 (TTTSLSSTST…PSLTSSSPTL (126 aa)) is 18 X approximate tandem repeats, Ser/Thr-rich. The 1-2 repeat unit spans residues 395–493 (MSTYFTTVSG…TSHSYSSVQT (99 aa)). Gly699 carries GPI-anchor amidated glycine lipidation. Residues 700–725 (SGSQTRLPLGKLVFAIMAVACNVIFS) constitute a propeptide, removed in mature form.

As to quaternary structure, heterodimer; disulfide-linked. In terms of processing, extensively O-glycosylated by PMT1 and PMT2. The GPI-anchor is attached to the protein in the endoplasmic reticulum and serves to target the protein to the cell surface. There, the glucosamine-inositol phospholipid moiety is cleaved off and the GPI-modified mannoprotein is covalently attached via its lipidless GPI glycan remnant to the 1,6-beta-glucan of the outer cell wall layer.

The protein localises to the secreted. Its subcellular location is the cell wall. It is found in the membrane. Cell wall anchoring subunit of the a-agglutinin heterodimer. S.cerevisiae a and alpha cells express the complementary cell surface glycoproteins a-agglutinin and alpha-agglutinin, respectively, which interact with one another to promote cellular aggregation during mating. The polypeptide is A-agglutinin anchorage subunit (AGA1) (Saccharomyces cerevisiae (strain ATCC 204508 / S288c) (Baker's yeast)).